We begin with the raw amino-acid sequence, 378 residues long: Queuine tRNA-ribosyltransferase (378 aa).

Residue Asp-91 is the Proton acceptor of the active site. Residues 91 to 95 (DSGGF), Asp-145, Gln-189, and Gly-216 each bind substrate. The RNA binding stretch occupies residues 247–253 (GVGKPED). The active-site Nucleophile is Asp-266. The RNA binding; important for wobble base 34 recognition stretch occupies residues 271–275 (TRNAR). Residues Cys-304, Cys-306, Cys-309, and His-335 each contribute to the Zn(2+) site.

It belongs to the queuine tRNA-ribosyltransferase family. In terms of assembly, homodimer. Within each dimer, one monomer is responsible for RNA recognition and catalysis, while the other monomer binds to the replacement base PreQ1. Zn(2+) is required as a cofactor.

The enzyme catalyses 7-aminomethyl-7-carbaguanine + guanosine(34) in tRNA = 7-aminomethyl-7-carbaguanosine(34) in tRNA + guanine. It participates in tRNA modification; tRNA-queuosine biosynthesis. Functionally, catalyzes the base-exchange of a guanine (G) residue with the queuine precursor 7-aminomethyl-7-deazaguanine (PreQ1) at position 34 (anticodon wobble position) in tRNAs with GU(N) anticodons (tRNA-Asp, -Asn, -His and -Tyr). Catalysis occurs through a double-displacement mechanism. The nucleophile active site attacks the C1' of nucleotide 34 to detach the guanine base from the RNA, forming a covalent enzyme-RNA intermediate. The proton acceptor active site deprotonates the incoming PreQ1, allowing a nucleophilic attack on the C1' of the ribose to form the product. After dissociation, two additional enzymatic reactions on the tRNA convert PreQ1 to queuine (Q), resulting in the hypermodified nucleoside queuosine (7-(((4,5-cis-dihydroxy-2-cyclopenten-1-yl)amino)methyl)-7-deazaguanosine). The protein is Queuine tRNA-ribosyltransferase of Vibrio atlanticus (strain LGP32) (Vibrio splendidus (strain Mel32)).